We begin with the raw amino-acid sequence, 159 residues long: Ribosome maturation factor RimP (159 aa).

It belongs to the RimP family.

The protein resides in the cytoplasm. Functionally, required for maturation of 30S ribosomal subunits. The polypeptide is Ribosome maturation factor RimP (Streptococcus pneumoniae (strain 70585)).